Consider the following 237-residue polypeptide: Phosphoribosylaminoimidazole-succinocarboxamide synthase (237 aa).

It belongs to the SAICAR synthetase family.

It catalyses the reaction 5-amino-1-(5-phospho-D-ribosyl)imidazole-4-carboxylate + L-aspartate + ATP = (2S)-2-[5-amino-1-(5-phospho-beta-D-ribosyl)imidazole-4-carboxamido]succinate + ADP + phosphate + 2 H(+). Its pathway is purine metabolism; IMP biosynthesis via de novo pathway; 5-amino-1-(5-phospho-D-ribosyl)imidazole-4-carboxamide from 5-amino-1-(5-phospho-D-ribosyl)imidazole-4-carboxylate: step 1/2. This Erwinia tasmaniensis (strain DSM 17950 / CFBP 7177 / CIP 109463 / NCPPB 4357 / Et1/99) protein is Phosphoribosylaminoimidazole-succinocarboxamide synthase.